The following is a 244-amino-acid chain: Small ribosomal subunit protein uS2m (244 aa).

Belongs to the universal ribosomal protein uS2 family.

The protein localises to the mitochondrion. This chain is Small ribosomal subunit protein uS2m (mrps2), found in Dictyostelium discoideum (Social amoeba).